A 493-amino-acid chain; its full sequence is Protein nucleotidyltransferase YdiU (493 aa).

ATP contacts are provided by G96, G98, R99, K119, D131, G132, R182, and R189. The active-site Proton acceptor is the D258. The Mg(2+) site is built by N259 and D268. D268 provides a ligand contact to ATP. The interval 471–493 (EKYTEFKNPPAPKERVSQTFCGT) is disordered.

The protein belongs to the SELO family. Mg(2+) serves as cofactor. The cofactor is Mn(2+).

The enzyme catalyses L-seryl-[protein] + ATP = 3-O-(5'-adenylyl)-L-seryl-[protein] + diphosphate. It catalyses the reaction L-threonyl-[protein] + ATP = 3-O-(5'-adenylyl)-L-threonyl-[protein] + diphosphate. The catalysed reaction is L-tyrosyl-[protein] + ATP = O-(5'-adenylyl)-L-tyrosyl-[protein] + diphosphate. It carries out the reaction L-histidyl-[protein] + UTP = N(tele)-(5'-uridylyl)-L-histidyl-[protein] + diphosphate. The enzyme catalyses L-seryl-[protein] + UTP = O-(5'-uridylyl)-L-seryl-[protein] + diphosphate. It catalyses the reaction L-tyrosyl-[protein] + UTP = O-(5'-uridylyl)-L-tyrosyl-[protein] + diphosphate. Functionally, nucleotidyltransferase involved in the post-translational modification of proteins. It can catalyze the addition of adenosine monophosphate (AMP) or uridine monophosphate (UMP) to a protein, resulting in modifications known as AMPylation and UMPylation. This chain is Protein nucleotidyltransferase YdiU, found in Nitrosococcus oceani (strain ATCC 19707 / BCRC 17464 / JCM 30415 / NCIMB 11848 / C-107).